The sequence spans 194 residues: Methylthioribulose-1-phosphate dehydratase (194 aa).

The Zn(2+) site is built by His-84 and His-86.

This sequence belongs to the aldolase class II family. MtnB subfamily. Zn(2+) is required as a cofactor.

The enzyme catalyses 5-(methylsulfanyl)-D-ribulose 1-phosphate = 5-methylsulfanyl-2,3-dioxopentyl phosphate + H2O. The protein operates within amino-acid biosynthesis; L-methionine biosynthesis via salvage pathway; L-methionine from S-methyl-5-thio-alpha-D-ribose 1-phosphate: step 2/6. In terms of biological role, catalyzes the dehydration of methylthioribulose-1-phosphate (MTRu-1-P) into 2,3-diketo-5-methylthiopentyl-1-phosphate (DK-MTP-1-P). This chain is Methylthioribulose-1-phosphate dehydratase, found in Cronobacter sakazakii (Enterobacter sakazakii).